The primary structure comprises 448 residues: 4-hydroxybenzoate transporter PcaK (448 aa).

Residues 1-30 lie on the Cytoplasmic side of the membrane; sequence MNQAQNSVGKSLDVQSFINQQPLSRYQWRV. The chain crosses the membrane as a helical span at residues 31–51; that stretch reads VLLCFLIVFLDGLDTAAMGFI. The Periplasmic portion of the chain corresponds to 52–67; sequence APALSQEWGIDRASLG. The helical transmembrane segment at 68-88 threads the bilayer; it reads PVMSAALIGMVFGALGSGPLA. The Cytoplasmic segment spans residues 89 to 94; sequence DRFGRK. A helical membrane pass occupies residues 95–115; sequence GVLVGAVLVFGGFSLASAYAT. The Periplasmic segment spans residues 116 to 119; it reads NVDQ. The helical transmembrane segment at 120–140 threads the bilayer; that stretch reads LLVLRFLTGLGLGAGMPNATT. Residues 141–152 lie on the Cytoplasmic side of the membrane; it reads LLSEYTPERLKS. The helical transmembrane segment at 153–173 threads the bilayer; it reads LLVTSMFCGFNLGMAGGGFIS. The Periplasmic segment spans residues 174–184; sequence AKMIPAYGWHS. The helical transmembrane segment at 185-205 threads the bilayer; that stretch reads LLVIGGVLPLLLALVLMVWLP. The Cytoplasmic segment spans residues 206–261; it reads ESARFLVVRNRGTDKIRKTLSPIAPQVVAEAGSFSVPEQKAVAARSVFAVIFSGTY. Residues 262-282 traverse the membrane as a helical segment; the sequence is GLGTMLLWLTYFMGLVIVYLL. The Periplasmic portion of the chain corresponds to 283-301; it reads TSWLPTLMRDSGASMEQAA. The chain crosses the membrane as a helical span at residues 302–322; sequence FIGALFQFGGVLSAVGVGWAM. The Cytoplasmic segment spans residues 323-329; it reads DRYNPHK. Residues 330-350 form a helical membrane-spanning segment; it reads VIGIFYLLAGVFAYAVGQSLG. Position 351 (Asn-351) is a topological domain, periplasmic. A helical transmembrane segment spans residues 352 to 372; sequence ITVLATLVLIAGMCVNGAQSA. The Cytoplasmic segment spans residues 373-398; the sequence is MPSLAARFYPTQGRATGVSWMLGIGR. A helical transmembrane segment spans residues 399 to 419; sequence FGAILGAWSGATLLGLGWNFE. Residues 420-421 lie on the Periplasmic side of the membrane; that stretch reads QV. Residues 422-442 traverse the membrane as a helical segment; it reads LTALLVPAALATVGVIVKGLV. Topologically, residues 443–448 are cytoplasmic; the sequence is SHADAT.

The protein belongs to the major facilitator superfamily. Aromatic acid:H(+) symporter (AAHS) (TC 2.A.1.15) family.

It localises to the cell inner membrane. Functionally, transports 4-hydroxybenzoate (4-HBA) and protocatechuate across the membrane. Driven by the proton motive force. Also functions as a chemoreceptor, which is required for chemotaxis to aromatic acids. In Pseudomonas putida (Arthrobacter siderocapsulatus), this protein is 4-hydroxybenzoate transporter PcaK (pcaK).